The sequence spans 236 residues: MAIIGILGTPYNTVEQSPFWWNKVSYTRQSFIDVFQDLGHTVIILPVDKTENIKNYLTLVDKIVLTGGADVSPYLYGEEPNAKLGTTDPIRDRFELATIKAALEANKPILGVCRGLQLLNVYFGGRLYQDLSQTSSQIKHLQSPTPQEIPTHHISVEQESALGFLPENYMVNSFHHQVIKDLGQGLTAIAHGNDGLVEAIENKEKHVLAVQWHPECTWETEHFDKKIFEIFANGTI.

Residues Ser17 to Ile236 enclose the Glutamine amidotransferase type-1 domain.

This Lactococcus lactis subsp. lactis (strain IL1403) (Streptococcus lactis) protein is Putative glutamine amidotransferase-like protein YvdE (yvdE).